We begin with the raw amino-acid sequence, 228 residues long: Small ribosomal subunit protein uS7m (228 aa).

Residues 1 to 33 (MAASVRHLLKPWTPSLCLMRWSRYNPYYLDPEP) constitute a mitochondrion transit peptide.

Belongs to the universal ribosomal protein uS7 family. In terms of assembly, component of the mitochondrial ribosome small subunit (28S) which comprises a 12S rRNA and about 30 distinct proteins.

The protein localises to the mitochondrion. This chain is Small ribosomal subunit protein uS7m (mrps7), found in Danio rerio (Zebrafish).